We begin with the raw amino-acid sequence, 561 residues long: Lipase maturation factor 1 (561 aa).

Residues methionine 1 to glycine 32 are disordered. Residues methionine 1 to phenylalanine 42 are Cytoplasmic-facing. A helical transmembrane segment spans residues tryptophan 43–phenylalanine 65. Residues histidine 66–aspartate 120 lie on the Lumenal side of the membrane. A helical membrane pass occupies residues alanine 121 to methionine 144. At alanine 145–methionine 200 the chain is on the cytoplasmic side. The helical transmembrane segment at tryptophan 201–alanine 214 threads the bilayer. Topologically, residues glycine 215–glycine 285 are lumenal. Residues alanine 286 to alanine 314 form a helical membrane-spanning segment. Residues cysteine 315 to threonine 360 are Cytoplasmic-facing. The helical transmembrane segment at valine 361–serine 382 threads the bilayer. Topologically, residues proline 383 to glutamate 561 are lumenal.

The protein belongs to the lipase maturation factor family. In terms of assembly, interacts with LPL and SEL1L.

The protein localises to the endoplasmic reticulum membrane. Involved in the maturation of specific proteins in the endoplasmic reticulum. Required for maturation and transport of active lipoprotein lipase (LPL) through the secretory pathway. Each LMF1 molecule chaperones 50 or more molecules of LPL. The sequence is that of Lipase maturation factor 1 (LMF1) from Bos taurus (Bovine).